The primary structure comprises 266 residues: Putative carbamate hydrolase RutD (266 aa).

An AB hydrolase-1 domain is found at Pro14–Leu115.

It belongs to the AB hydrolase superfamily. Hydrolase RutD family.

It catalyses the reaction carbamate + 2 H(+) = NH4(+) + CO2. Its function is as follows. Involved in pyrimidine catabolism. May facilitate the hydrolysis of carbamate, a reaction that can also occur spontaneously. The polypeptide is Putative carbamate hydrolase RutD (Shigella sonnei (strain Ss046)).